The primary structure comprises 166 residues: Ribosome maturation factor RimM (166 aa).

A PRC barrel domain is found at 91–163 (EDEFYEFQLI…KMQITPPEGW (73 aa)).

This sequence belongs to the RimM family. Binds ribosomal protein uS19.

It is found in the cytoplasm. In terms of biological role, an accessory protein needed during the final step in the assembly of 30S ribosomal subunit, possibly for assembly of the head region. Essential for efficient processing of 16S rRNA. May be needed both before and after RbfA during the maturation of 16S rRNA. It has affinity for free ribosomal 30S subunits but not for 70S ribosomes. In Sulfurihydrogenibium sp. (strain YO3AOP1), this protein is Ribosome maturation factor RimM.